The chain runs to 445 residues: UPF0210 protein LACR_1020 (445 aa).

Belongs to the UPF0210 family. In terms of assembly, homodimer.

In Lactococcus lactis subsp. cremoris (strain SK11), this protein is UPF0210 protein LACR_1020.